Here is a 193-residue protein sequence, read N- to C-terminus: MASLLDSVTVTRVFSLPIAASVSSSSAAPSVSRRRISPARFLEFRGLKSSRSLVTQSASLGANRRTRIARGGRIACEAQDTTAAAVEVPNLSDSEWQTKVLESDVPVLVEFWAPWCGPCRMIHPIVDQLAKDFAGKFKFYKINTDESPNTANRYGIRSVPTVIIFKGGEKKDSIIGAVPRETLEKTIERFLVE.

The N-terminal 82 residues, 1 to 82, are a transit peptide targeting the chloroplast; it reads MASLLDSVTV…RIACEAQDTT (82 aa). Positions 83–192 constitute a Thioredoxin domain; it reads AAAVEVPNLS…LEKTIERFLV (110 aa). Catalysis depends on nucleophile residues cysteine 116 and cysteine 119. Residues cysteine 116 and cysteine 119 are joined by a disulfide bond.

It belongs to the thioredoxin family. Plant M-type subfamily.

It is found in the plastid. It localises to the chloroplast stroma. Functionally, thiol-disulfide oxidoreductase involved in the redox regulation of enzyme of the oxidative pentose phosphate pathway. Under reducing conditions, inhibits the glucose-6-phosphate dehydrogenase. The polypeptide is Thioredoxin M4, chloroplastic (Arabidopsis thaliana (Mouse-ear cress)).